A 111-amino-acid polypeptide reads, in one-letter code: Large ribosomal subunit protein uL24 (111 aa).

Belongs to the universal ribosomal protein uL24 family. In terms of assembly, part of the 50S ribosomal subunit.

One of two assembly initiator proteins, it binds directly to the 5'-end of the 23S rRNA, where it nucleates assembly of the 50S subunit. Its function is as follows. One of the proteins that surrounds the polypeptide exit tunnel on the outside of the subunit. In Heliobacterium modesticaldum (strain ATCC 51547 / Ice1), this protein is Large ribosomal subunit protein uL24.